Reading from the N-terminus, the 571-residue chain is MADEAKAKGNAAFSSGDFNSAVNHFTDAINLTPTNHVLFSNRSAAHASLNHYDEALSDAKKTVELKPDWGKGYSRLGAAHLGLNQFDEAVEAYSKGLEIDPSNEGLKSGLADAKASASRSRASAPNPFGDAFQGPEMWSKLTADPSTRGLLKQPDFVNMMKEIQRNPSNLNLYLQDQRVMQALGVLLNIQIRTQQAGDDMEIGEEEMAVPSRKEPEVEKKRKPEPEPEPEPEFGEEKQKKLKAQKEKELGNAAYKKKDFETAIQHYSTAMEIDDEDISYITNRAAVHLEMGKYDECIKDCDKAVERGRELRSDYKMVAKALTRKGTALGKMAKVSKDYEPVIQTYQKALTEHRNPETLKRLNEAERAKKELEQQEYYDPNIGDEEREKGNDFFKEQKYPDAVRHYTEAIKRNPKDPRAYSNRAACYTKLGAMPEGLKDAEKCIELDPTFLKGYSRKGAVQFFMKEYDNAMETYQKGLEHDPNNQELLDGVKRCVQQINKANRGDLTPEELKERQAKGMQDPEIQNILTDPVMRQVLSDLQENPAAAQKHMQNPMIMNKIQKLISSGIVQMK.

3 TPR repeats span residues 2-35 (ADEA…TPTN), 37-69 (VLFS…KPDW), and 70-103 (GKGY…DPSN). Residues 117–137 (ASRSRASAPNPFGDAFQGPEM) form a disordered region. One can recognise an STI1 1 domain in the interval 134–173 (GPEMWSKLTADPSTRGLLKQPDFVNMMKEIQRNPSNLNLY). Serine 168 carries the phosphoserine modification. Residues 198-207 (DDMEIGEEEM) show a composition bias toward acidic residues. The disordered stretch occupies residues 198–245 (DDMEIGEEEMAVPSRKEPEVEKKRKPEPEPEPEPEFGEEKQKKLKAQK). 2 stretches are compositionally biased toward basic and acidic residues: residues 211–225 (SRKE…KPEP) and 234–245 (GEEKQKKLKAQK). The short motif at 240–257 (KLKAQKEKELGNAAYKKK) is the Bipartite nuclear localization signal element. TPR repeat units follow at residues 243–276 (AQKE…DDED), 278–310 (SYIT…GREL), 322–355 (TRKG…HRNP), 382–415 (GDEE…NPKD), 417–449 (RAYS…DPTF), and 450–483 (LKGY…DPNN). The region spanning 520–559 (DPEIQNILTDPVMRQVLSDLQENPAAAQKHMQNPMIMNKI) is the STI1 2 domain.

Co-chaperone that forms a complex with HSP70 and HSP90 and preproteins (e.g. chloroplast preproteins). Phosphorylated. Post-translationally, acetylated.

Its subcellular location is the cytoplasm. The protein resides in the nucleus. Its function is as follows. Mediates the association of the molecular chaperones HSP70 and HSP90. Mediates nuclear encoded chloroplast preproteins binding to HSP90 prior to chloroplastic sorting. This chain is Hsp70-Hsp90 organizing protein 2 (HOP2), found in Arabidopsis thaliana (Mouse-ear cress).